Here is a 211-residue protein sequence, read N- to C-terminus: Urease accessory protein UreG (211 aa).

11-18 (GPVGAGKT) serves as a coordination point for GTP.

The protein belongs to the SIMIBI class G3E GTPase family. UreG subfamily. In terms of assembly, homodimer. UreD, UreF and UreG form a complex that acts as a GTP-hydrolysis-dependent molecular chaperone, activating the urease apoprotein by helping to assemble the nickel containing metallocenter of UreC. The UreE protein probably delivers the nickel.

The protein localises to the cytoplasm. In terms of biological role, facilitates the functional incorporation of the urease nickel metallocenter. This process requires GTP hydrolysis, probably effectuated by UreG. The polypeptide is Urease accessory protein UreG (Actinobacillus pleuropneumoniae serotype 3 (strain JL03)).